A 558-amino-acid polypeptide reads, in one-letter code: Germacrene A synthase short form (558 aa).

Residues Asp311, Asp315, Asp455, Thr459, and Glu463 each coordinate Mg(2+). The short motif at 311 to 315 (DDTYD) is the DDXXD motif element.

It belongs to the terpene synthase family. Requires Mg(2+) as cofactor. Expressed in roots and in green and etiolated seedlings.

It catalyses the reaction (2E,6E)-farnesyl diphosphate = (+)-(R)-germacrene A + diphosphate. Its pathway is secondary metabolite biosynthesis; terpenoid biosynthesis. Involved in sesquiterpene lactone biosynthesis. Produces exclusively (+)-germacrene A. The sequence is that of Germacrene A synthase short form from Cichorium intybus (Chicory).